The chain runs to 482 residues: Probable cytosol aminopeptidase (482 aa).

Positions 251 and 256 each coordinate Mn(2+). Residue K263 is part of the active site. The Mn(2+) site is built by D274, D333, and E335. R337 is an active-site residue.

Belongs to the peptidase M17 family. Mn(2+) is required as a cofactor.

It localises to the cytoplasm. The enzyme catalyses Release of an N-terminal amino acid, Xaa-|-Yaa-, in which Xaa is preferably Leu, but may be other amino acids including Pro although not Arg or Lys, and Yaa may be Pro. Amino acid amides and methyl esters are also readily hydrolyzed, but rates on arylamides are exceedingly low.. The catalysed reaction is Release of an N-terminal amino acid, preferentially leucine, but not glutamic or aspartic acids.. Its function is as follows. Presumably involved in the processing and regular turnover of intracellular proteins. Catalyzes the removal of unsubstituted N-terminal amino acids from various peptides. In Acinetobacter baumannii (strain AB307-0294), this protein is Probable cytosol aminopeptidase.